The following is a 375-amino-acid chain: Peptidyl-prolyl cis-trans isomerase D (375 aa).

The PPIase cyclophilin-type domain occupies 7 to 169 (YFDITIANEP…QEVTISSAGV (163 aa)). TPR repeat units follow at residues 217–250 (AGKLKEVGTKEFKAGNFAVALDKYQKALRYLDVH), 270–307 (LPLLTNAALCALKLPASPNTSSLVVSLTSRALTLPNLS), and 312–345 (GKALYRRAQAYVLKKDDEAAEKDLKGALECVPGD).

Belongs to the cyclophilin-type PPIase family. PPIase D subfamily.

Its subcellular location is the cytoplasm. The catalysed reaction is [protein]-peptidylproline (omega=180) = [protein]-peptidylproline (omega=0). Its function is as follows. PPIases accelerate the folding of proteins. It catalyzes the cis-trans isomerization of proline imidic peptide bonds in oligopeptides. In Cryptococcus neoformans var. neoformans serotype D (strain B-3501A) (Filobasidiella neoformans), this protein is Peptidyl-prolyl cis-trans isomerase D (CPR6).